The following is a 92-amino-acid chain: Small ribosomal subunit protein uS19 (92 aa).

The protein belongs to the universal ribosomal protein uS19 family.

In terms of biological role, protein S19 forms a complex with S13 that binds strongly to the 16S ribosomal RNA. The polypeptide is Small ribosomal subunit protein uS19 (Chromobacterium violaceum (strain ATCC 12472 / DSM 30191 / JCM 1249 / CCUG 213 / NBRC 12614 / NCIMB 9131 / NCTC 9757 / MK)).